The sequence spans 366 residues: Chorismate synthase (366 aa).

Positions 48 and 54 each coordinate NADP(+). FMN contacts are provided by residues 125-127 (RSS), 238-239 (NA), G278, 293-297 (KPTSS), and R319.

It belongs to the chorismate synthase family. As to quaternary structure, homotetramer. FMNH2 serves as cofactor.

The enzyme catalyses 5-O-(1-carboxyvinyl)-3-phosphoshikimate = chorismate + phosphate. It functions in the pathway metabolic intermediate biosynthesis; chorismate biosynthesis; chorismate from D-erythrose 4-phosphate and phosphoenolpyruvate: step 7/7. In terms of biological role, catalyzes the anti-1,4-elimination of the C-3 phosphate and the C-6 proR hydrogen from 5-enolpyruvylshikimate-3-phosphate (EPSP) to yield chorismate, which is the branch point compound that serves as the starting substrate for the three terminal pathways of aromatic amino acid biosynthesis. This reaction introduces a second double bond into the aromatic ring system. This Ralstonia pickettii (strain 12J) protein is Chorismate synthase.